The chain runs to 363 residues: GTPase Obg (363 aa).

The 159-residue stretch at Met1–Leu159 folds into the Obg domain. The 182-residue stretch at Ala160 to Gln341 folds into the OBG-type G domain. GTP-binding positions include Gly166–Ser173, Phe191–His195, Asp213–Gly216, Asn291–Asp294, and Ser322–Leu324. Residues Ser173 and Thr193 each coordinate Mg(2+). The segment at Gly343–Ala363 is disordered.

Belongs to the TRAFAC class OBG-HflX-like GTPase superfamily. OBG GTPase family. As to quaternary structure, monomer. Requires Mg(2+) as cofactor.

The protein localises to the cytoplasm. An essential GTPase which binds GTP, GDP and possibly (p)ppGpp with moderate affinity, with high nucleotide exchange rates and a fairly low GTP hydrolysis rate. Plays a role in control of the cell cycle, stress response, ribosome biogenesis and in those bacteria that undergo differentiation, in morphogenesis control. The protein is GTPase Obg of Verminephrobacter eiseniae (strain EF01-2).